Reading from the N-terminus, the 564-residue chain is Dihydroxy-acid dehydratase (564 aa).

Asp-80 provides a ligand contact to Mg(2+). Residue Cys-121 participates in [2Fe-2S] cluster binding. Positions 122 and 123 each coordinate Mg(2+). At Lys-123 the chain carries N6-carboxylysine. Residue Cys-194 coordinates [2Fe-2S] cluster. A Mg(2+)-binding site is contributed by Glu-447. Residue Ser-473 is the Proton acceptor of the active site.

The protein belongs to the IlvD/Edd family. As to quaternary structure, homodimer. Requires [2Fe-2S] cluster as cofactor. It depends on Mg(2+) as a cofactor.

The catalysed reaction is (2R)-2,3-dihydroxy-3-methylbutanoate = 3-methyl-2-oxobutanoate + H2O. It catalyses the reaction (2R,3R)-2,3-dihydroxy-3-methylpentanoate = (S)-3-methyl-2-oxopentanoate + H2O. It participates in amino-acid biosynthesis; L-isoleucine biosynthesis; L-isoleucine from 2-oxobutanoate: step 3/4. Its pathway is amino-acid biosynthesis; L-valine biosynthesis; L-valine from pyruvate: step 3/4. Its function is as follows. Functions in the biosynthesis of branched-chain amino acids. Catalyzes the dehydration of (2R,3R)-2,3-dihydroxy-3-methylpentanoate (2,3-dihydroxy-3-methylvalerate) into 2-oxo-3-methylpentanoate (2-oxo-3-methylvalerate) and of (2R)-2,3-dihydroxy-3-methylbutanoate (2,3-dihydroxyisovalerate) into 2-oxo-3-methylbutanoate (2-oxoisovalerate), the penultimate precursor to L-isoleucine and L-valine, respectively. This is Dihydroxy-acid dehydratase from Listeria welshimeri serovar 6b (strain ATCC 35897 / DSM 20650 / CCUG 15529 / CIP 8149 / NCTC 11857 / SLCC 5334 / V8).